The chain runs to 484 residues: Protein nucleotidyltransferase YdiU (484 aa).

Gly-87, Gly-89, Arg-90, Lys-110, Asp-122, Gly-123, Arg-173, and Arg-180 together coordinate ATP. The active-site Proton acceptor is Asp-249. Positions 250 and 259 each coordinate Mg(2+). Asp-259 lines the ATP pocket.

Belongs to the SELO family. Mg(2+) serves as cofactor. Mn(2+) is required as a cofactor.

The catalysed reaction is L-seryl-[protein] + ATP = 3-O-(5'-adenylyl)-L-seryl-[protein] + diphosphate. The enzyme catalyses L-threonyl-[protein] + ATP = 3-O-(5'-adenylyl)-L-threonyl-[protein] + diphosphate. It carries out the reaction L-tyrosyl-[protein] + ATP = O-(5'-adenylyl)-L-tyrosyl-[protein] + diphosphate. It catalyses the reaction L-histidyl-[protein] + UTP = N(tele)-(5'-uridylyl)-L-histidyl-[protein] + diphosphate. The catalysed reaction is L-seryl-[protein] + UTP = O-(5'-uridylyl)-L-seryl-[protein] + diphosphate. The enzyme catalyses L-tyrosyl-[protein] + UTP = O-(5'-uridylyl)-L-tyrosyl-[protein] + diphosphate. In terms of biological role, nucleotidyltransferase involved in the post-translational modification of proteins. It can catalyze the addition of adenosine monophosphate (AMP) or uridine monophosphate (UMP) to a protein, resulting in modifications known as AMPylation and UMPylation. In Lachnoclostridium phytofermentans (strain ATCC 700394 / DSM 18823 / ISDg) (Clostridium phytofermentans), this protein is Protein nucleotidyltransferase YdiU.